The chain runs to 251 residues: Triosephosphate isomerase (251 aa).

12–14 (NWK) contributes to the substrate binding site. Histidine 98 serves as the catalytic Electrophile. The Proton acceptor role is filled by glutamate 168. Substrate-binding positions include glycine 174, serine 213, and 234–235 (GG).

The protein belongs to the triosephosphate isomerase family. Homodimer.

The protein resides in the cytoplasm. The enzyme catalyses D-glyceraldehyde 3-phosphate = dihydroxyacetone phosphate. It functions in the pathway carbohydrate biosynthesis; gluconeogenesis. Its pathway is carbohydrate degradation; glycolysis; D-glyceraldehyde 3-phosphate from glycerone phosphate: step 1/1. Its function is as follows. Involved in the gluconeogenesis. Catalyzes stereospecifically the conversion of dihydroxyacetone phosphate (DHAP) to D-glyceraldehyde-3-phosphate (G3P). The chain is Triosephosphate isomerase from Afipia carboxidovorans (strain ATCC 49405 / DSM 1227 / KCTC 32145 / OM5) (Oligotropha carboxidovorans).